Reading from the N-terminus, the 367-residue chain is Phosphoribosylaminoimidazole-succinocarboxamide synthase (367 aa).

Belongs to the SAICAR synthetase family.

The catalysed reaction is 5-amino-1-(5-phospho-D-ribosyl)imidazole-4-carboxylate + L-aspartate + ATP = (2S)-2-[5-amino-1-(5-phospho-beta-D-ribosyl)imidazole-4-carboxamido]succinate + ADP + phosphate + 2 H(+). It participates in purine metabolism; IMP biosynthesis via de novo pathway; 5-amino-1-(5-phospho-D-ribosyl)imidazole-4-carboxamide from 5-amino-1-(5-phospho-D-ribosyl)imidazole-4-carboxylate: step 1/2. The chain is Phosphoribosylaminoimidazole-succinocarboxamide synthase from Shewanella sp. (strain MR-4).